Here is a 155-residue protein sequence, read N- to C-terminus: Mediator of RNA polymerase II transcription subunit 21 (155 aa).

Positions 29–73 (QAPPSVPPGQHRVDTMPEIKGKAASENPQSNPPQPAEPPVPEKIS) are disordered. The segment covering 39 to 51 (HRVDTMPEIKGKA) has biased composition (basic and acidic residues). Over residues 58–69 (SNPPQPAEPPVP) the composition is skewed to pro residues. Positions 75-147 (EQFNQDLKEF…EVLLKKVEDK (73 aa)) form a coiled coil.

The protein belongs to the Mediator complex subunit 21 family. As to quaternary structure, component of the Mediator complex.

Its subcellular location is the nucleus. Its function is as follows. Component of the Mediator complex, a coactivator involved in the regulated transcription of nearly all RNA polymerase II-dependent genes. Mediator functions as a bridge to convey information from gene-specific regulatory proteins to the basal RNA polymerase II transcription machinery. Mediator is recruited to promoters by direct interactions with regulatory proteins and serves as a scaffold for the assembly of a functional preinitiation complex with RNA polymerase II and the general transcription factors. This is Mediator of RNA polymerase II transcription subunit 21 (SRB7) from Phaeosphaeria nodorum (strain SN15 / ATCC MYA-4574 / FGSC 10173) (Glume blotch fungus).